Here is a 296-residue protein sequence, read N- to C-terminus: GTPase Era (296 aa).

Residues 3–170 (KSGFITIVGR…LELMVKYLPE (168 aa)) form the Era-type G domain. Positions 11-18 (GRPNVGKS) are G1. Position 11–18 (11–18 (GRPNVGKS)) interacts with GTP. Positions 37-41 (QTTRN) are G2. Positions 58-61 (DTPG) are G3. GTP contacts are provided by residues 58–62 (DTPGI) and 120–123 (NKVD). The G4 stretch occupies residues 120 to 123 (NKVD). The segment at 149-151 (ISA) is G5. One can recognise a KH type-2 domain in the interval 201–278 (LSQEVPHGIA…NIKIWVKVRK (78 aa)).

Belongs to the TRAFAC class TrmE-Era-EngA-EngB-Septin-like GTPase superfamily. Era GTPase family. In terms of assembly, monomer.

The protein resides in the cytoplasm. The protein localises to the cell membrane. Functionally, an essential GTPase that binds both GDP and GTP, with rapid nucleotide exchange. Plays a role in 16S rRNA processing and 30S ribosomal subunit biogenesis and possibly also in cell cycle regulation and energy metabolism. In Clostridium perfringens (strain 13 / Type A), this protein is GTPase Era.